The following is a 77-amino-acid chain: Acyl carrier protein (77 aa).

The Carrier domain maps to 1–76; it reads MENFDKVKDI…DAVKFINSIE (76 aa). At Ser-36 the chain carries O-(pantetheine 4'-phosphoryl)serine.

It belongs to the acyl carrier protein (ACP) family. Post-translationally, 4'-phosphopantetheine is transferred from CoA to a specific serine of apo-ACP by AcpS. This modification is essential for activity because fatty acids are bound in thioester linkage to the sulfhydryl of the prosthetic group.

It is found in the cytoplasm. The protein operates within lipid metabolism; fatty acid biosynthesis. In terms of biological role, carrier of the growing fatty acid chain in fatty acid biosynthesis. The chain is Acyl carrier protein from Staphylococcus saprophyticus subsp. saprophyticus (strain ATCC 15305 / DSM 20229 / NCIMB 8711 / NCTC 7292 / S-41).